A 296-amino-acid chain; its full sequence is Ribosomal RNA small subunit methyltransferase A (296 aa).

Positions 30, 32, 57, 78, 103, and 128 each coordinate S-adenosyl-L-methionine.

The protein belongs to the class I-like SAM-binding methyltransferase superfamily. rRNA adenine N(6)-methyltransferase family. RsmA subfamily.

It localises to the cytoplasm. It catalyses the reaction adenosine(1518)/adenosine(1519) in 16S rRNA + 4 S-adenosyl-L-methionine = N(6)-dimethyladenosine(1518)/N(6)-dimethyladenosine(1519) in 16S rRNA + 4 S-adenosyl-L-homocysteine + 4 H(+). In terms of biological role, specifically dimethylates two adjacent adenosines (A1518 and A1519) in the loop of a conserved hairpin near the 3'-end of 16S rRNA in the 30S particle. May play a critical role in biogenesis of 30S subunits. This chain is Ribosomal RNA small subunit methyltransferase A, found in Macrococcus caseolyticus (strain JCSC5402) (Macrococcoides caseolyticum).